A 1070-amino-acid chain; its full sequence is Granule associated Rac and RHOG effector protein 1 (1070 aa).

Disordered regions lie at residues 681–771 (EQKA…VGAG), 855–992 (SQAM…STLP), and 1032–1070 (SYVQ…LPQY). The span at 692 to 702 (PSLPVPPPPRA) shows a compositional bias: pro residues. 3 stretches are compositionally biased toward low complexity: residues 719–742 (PQQQ…QPIG), 906–924 (AQGD…NGDS), and 951–962 (TSTLPSPPLLTT). Ser-723 carries the post-translational modification Phosphoserine. Residues 977 to 992 (PKAPWQHPSPLPSTLP) are compositionally biased toward pro residues. The span at 1046–1058 (HKAAPKGFKAFPG) shows a compositional bias: low complexity.

Interacts with AGO2 and TNRC6A.

It localises to the cytoplasm. The protein resides in the P-body. Acts as an effector of RAC1. Associates with CCR4-NOT complex which is one of the major cellular mRNA deadenylases and is linked to various cellular processes including bulk mRNA degradation, miRNA-mediated repression, translational repression during translational initiation and general transcription regulation. May also play a role in miRNA silencing machinery. The sequence is that of Granule associated Rac and RHOG effector protein 1 from Homo sapiens (Human).